Here is a 78-residue protein sequence, read N- to C-terminus: UPF0270 protein ECA4061 (78 aa).

It belongs to the UPF0270 family.

The polypeptide is UPF0270 protein ECA4061 (Pectobacterium atrosepticum (strain SCRI 1043 / ATCC BAA-672) (Erwinia carotovora subsp. atroseptica)).